Here is a 397-residue protein sequence, read N- to C-terminus: Chorismate synthase (397 aa).

Positions 40 and 46 each coordinate NADP(+). FMN is bound by residues 129 to 131 (RSS), 257 to 258 (QA), Gly302, 317 to 321 (KPISS), and Arg343.

This sequence belongs to the chorismate synthase family. In terms of assembly, homotetramer. The cofactor is FMNH2.

It carries out the reaction 5-O-(1-carboxyvinyl)-3-phosphoshikimate = chorismate + phosphate. It functions in the pathway metabolic intermediate biosynthesis; chorismate biosynthesis; chorismate from D-erythrose 4-phosphate and phosphoenolpyruvate: step 7/7. In terms of biological role, catalyzes the anti-1,4-elimination of the C-3 phosphate and the C-6 proR hydrogen from 5-enolpyruvylshikimate-3-phosphate (EPSP) to yield chorismate, which is the branch point compound that serves as the starting substrate for the three terminal pathways of aromatic amino acid biosynthesis. This reaction introduces a second double bond into the aromatic ring system. The sequence is that of Chorismate synthase from Chlorobium phaeobacteroides (strain DSM 266 / SMG 266 / 2430).